Consider the following 213-residue polypeptide: Orotate phosphoribosyltransferase (213 aa).

Lysine 26 is a binding site for 5-phospho-alpha-D-ribose 1-diphosphate. Orotate is bound at residue 34 to 35 (FF). 5-phospho-alpha-D-ribose 1-diphosphate-binding positions include 72 to 73 (YK), arginine 99, lysine 100, lysine 103, histidine 105, and 124 to 132 (DDVITAGTA). Orotate-binding residues include threonine 128 and arginine 156.

This sequence belongs to the purine/pyrimidine phosphoribosyltransferase family. PyrE subfamily. As to quaternary structure, homodimer. The cofactor is Mg(2+).

The enzyme catalyses orotidine 5'-phosphate + diphosphate = orotate + 5-phospho-alpha-D-ribose 1-diphosphate. Its pathway is pyrimidine metabolism; UMP biosynthesis via de novo pathway; UMP from orotate: step 1/2. Its function is as follows. Catalyzes the transfer of a ribosyl phosphate group from 5-phosphoribose 1-diphosphate to orotate, leading to the formation of orotidine monophosphate (OMP). This chain is Orotate phosphoribosyltransferase, found in Pseudomonas syringae pv. syringae (strain B728a).